Consider the following 208-residue polypeptide: Outer-membrane lipoprotein carrier protein (208 aa).

The signal sequence occupies residues 1–23; it reads MKKTVKNLTALLTLALAAPWALA.

The protein belongs to the LolA family. As to quaternary structure, monomer.

The protein resides in the periplasm. Participates in the translocation of lipoproteins from the inner membrane to the outer membrane. Only forms a complex with a lipoprotein if the residue after the N-terminal Cys is not an aspartate (The Asp acts as a targeting signal to indicate that the lipoprotein should stay in the inner membrane). The protein is Outer-membrane lipoprotein carrier protein of Actinobacillus succinogenes (strain ATCC 55618 / DSM 22257 / CCUG 43843 / 130Z).